A 35-amino-acid polypeptide reads, in one-letter code: Photosystem II reaction center protein M (35 aa).

The helical transmembrane segment at 5–25 threads the bilayer; that stretch reads ILAFIATALFIIIPTAFLLIL.

Belongs to the PsbM family. In terms of assembly, PSII is composed of 1 copy each of membrane proteins PsbA, PsbB, PsbC, PsbD, PsbE, PsbF, PsbH, PsbI, PsbJ, PsbK, PsbL, PsbM, PsbT, PsbX, PsbY, PsbZ, Psb30/Ycf12, at least 3 peripheral proteins of the oxygen-evolving complex and a large number of cofactors. It forms dimeric complexes.

The protein localises to the plastid. The protein resides in the chloroplast thylakoid membrane. One of the components of the core complex of photosystem II (PSII). PSII is a light-driven water:plastoquinone oxidoreductase that uses light energy to abstract electrons from H(2)O, generating O(2) and a proton gradient subsequently used for ATP formation. It consists of a core antenna complex that captures photons, and an electron transfer chain that converts photonic excitation into a charge separation. This subunit is found at the monomer-monomer interface. The polypeptide is Photosystem II reaction center protein M (Chara vulgaris (Common stonewort)).